The sequence spans 481 residues: Putative cytochrome P450 520B1 (481 aa).

Cys427 is a binding site for heme.

Belongs to the cytochrome P450 family. Heme serves as cofactor.

The chain is Putative cytochrome P450 520B1 (cyp520B1) from Dictyostelium discoideum (Social amoeba).